We begin with the raw amino-acid sequence, 322 residues long: 4-diphosphocytidyl-2-C-methyl-D-erythritol kinase (322 aa).

The active site involves lysine 18. 130 to 140 contributes to the ATP binding site; the sequence is PMGAGLGGGSS. The active site involves aspartate 172.

It belongs to the GHMP kinase family. IspE subfamily.

The enzyme catalyses 4-CDP-2-C-methyl-D-erythritol + ATP = 4-CDP-2-C-methyl-D-erythritol 2-phosphate + ADP + H(+). It participates in isoprenoid biosynthesis; isopentenyl diphosphate biosynthesis via DXP pathway; isopentenyl diphosphate from 1-deoxy-D-xylulose 5-phosphate: step 3/6. Its function is as follows. Catalyzes the phosphorylation of the position 2 hydroxy group of 4-diphosphocytidyl-2C-methyl-D-erythritol. This Psychrobacter cryohalolentis (strain ATCC BAA-1226 / DSM 17306 / VKM B-2378 / K5) protein is 4-diphosphocytidyl-2-C-methyl-D-erythritol kinase.